A 106-amino-acid polypeptide reads, in one-letter code: Urease subunit beta (106 aa).

The protein belongs to the urease beta subunit family. Heterotrimer of UreA (gamma), UreB (beta) and UreC (alpha) subunits. Three heterotrimers associate to form the active enzyme.

It localises to the cytoplasm. The catalysed reaction is urea + 2 H2O + H(+) = hydrogencarbonate + 2 NH4(+). The protein operates within nitrogen metabolism; urea degradation; CO(2) and NH(3) from urea (urease route): step 1/1. In Escherichia coli O157:H7, this protein is Urease subunit beta.